Reading from the N-terminus, the 903-residue chain is Protein translocase subunit SecA (903 aa).

ATP contacts are provided by residues glutamine 87, 105–109, and aspartate 507; that span reads GEGKT. A disordered region spans residues 854-893; that stretch reads STMADSSGDVKSSTAESKAPYVRDGRKVGRNEPCPCGSGK. Over residues 856-869 the composition is skewed to polar residues; the sequence is MADSSGDVKSSTAE. Positions 874–883 are enriched in basic and acidic residues; that stretch reads YVRDGRKVGR. Cysteine 887, cysteine 889, cysteine 898, and histidine 899 together coordinate Zn(2+).

This sequence belongs to the SecA family. As to quaternary structure, monomer and homodimer. Part of the essential Sec protein translocation apparatus which comprises SecA, SecYEG and auxiliary proteins SecDF-YajC and YidC. Zn(2+) serves as cofactor.

The protein localises to the cell inner membrane. It is found in the cytoplasm. The enzyme catalyses ATP + H2O + cellular proteinSide 1 = ADP + phosphate + cellular proteinSide 2.. Its function is as follows. Part of the Sec protein translocase complex. Interacts with the SecYEG preprotein conducting channel. Has a central role in coupling the hydrolysis of ATP to the transfer of proteins into and across the cell membrane, serving both as a receptor for the preprotein-SecB complex and as an ATP-driven molecular motor driving the stepwise translocation of polypeptide chains across the membrane. This Nitrosococcus oceani (strain ATCC 19707 / BCRC 17464 / JCM 30415 / NCIMB 11848 / C-107) protein is Protein translocase subunit SecA.